Consider the following 290-residue polypeptide: DegV domain-containing protein MG450 (290 aa).

Positions 3-289 (IAFLVDSVSN…INSYAFLIQT (287 aa)) constitute a DegV domain. Residues Thr-65 and Ser-97 each coordinate hexadecanoate.

May bind long-chain fatty acids, such as palmitate, and may play a role in lipid transport or fatty acid metabolism. The protein is DegV domain-containing protein MG450 of Mycoplasma genitalium (strain ATCC 33530 / DSM 19775 / NCTC 10195 / G37) (Mycoplasmoides genitalium).